The chain runs to 189 residues: UPF0398 protein lp_1753 (189 aa).

This sequence belongs to the UPF0398 family.

The sequence is that of UPF0398 protein lp_1753 from Lactiplantibacillus plantarum (strain ATCC BAA-793 / NCIMB 8826 / WCFS1) (Lactobacillus plantarum).